Reading from the N-terminus, the 225-residue chain is Cytidylate kinase (225 aa).

11-19 (GPAAAGKST) contributes to the ATP binding site.

Belongs to the cytidylate kinase family. Type 1 subfamily.

The protein resides in the cytoplasm. The enzyme catalyses CMP + ATP = CDP + ADP. It carries out the reaction dCMP + ATP = dCDP + ADP. The polypeptide is Cytidylate kinase (Anoxybacillus flavithermus (strain DSM 21510 / WK1)).